Consider the following 149-residue polypeptide: Transcriptional repressor NrdR (149 aa).

Residues 3–34 fold into a zinc finger; sequence CPFCAAVDTKVIDSRLVSDGSQVRRRRQCLDC. One can recognise an ATP-cone domain in the interval 49–139; the sequence is PRVIKSDEVR…VYRSFEDVRE (91 aa).

It belongs to the NrdR family. Zn(2+) serves as cofactor.

Negatively regulates transcription of bacterial ribonucleotide reductase nrd genes and operons by binding to NrdR-boxes. The sequence is that of Transcriptional repressor NrdR from Yersinia pseudotuberculosis serotype O:1b (strain IP 31758).